The following is a 534-amino-acid chain: Serine/threonine-protein kinase ppk15 (534 aa).

A disordered region spans residues 1–40; the sequence is MDSDSPILPLSNNPPAARTHDHSQRNNHARHVSSSGTTLF. 3 positions are modified to phosphoserine: S33, S56, and S60. Residues 85-104 are disordered; that stretch reads FSSEQNPRRPLTKPSEGVHN. The Protein kinase domain maps to 130-458; that stretch reads YLILDTLGHG…PDQAKNHPFI (329 aa). Residues 136-144 and K159 contribute to the ATP site; that span reads LGHGTFGQV. The active-site Proton acceptor is the D257. Y291 bears the Phosphotyrosine mark.

This sequence belongs to the protein kinase superfamily. Ser/Thr protein kinase family.

The protein resides in the cytoplasm. Its subcellular location is the cytoskeleton. The protein localises to the microtubule organizing center. It is found in the spindle pole body. It catalyses the reaction L-seryl-[protein] + ATP = O-phospho-L-seryl-[protein] + ADP + H(+). The enzyme catalyses L-threonyl-[protein] + ATP = O-phospho-L-threonyl-[protein] + ADP + H(+). The sequence is that of Serine/threonine-protein kinase ppk15 (ppk15) from Schizosaccharomyces pombe (strain 972 / ATCC 24843) (Fission yeast).